A 187-amino-acid chain; its full sequence is ECF RNA polymerase sigma factor SigW (187 aa).

Residues 3 to 95 form a sigma-70 factor domain-2 region; sequence MMIKKRIKQV…RKKKPDYYLD (93 aa). A Polymerase core binding motif is present at residues 47–50; it reads DIAQ. The segment at 125–187 is sigma-70 factor domain-4; that stretch reads ELSNTIQQKI…EALRKQLRDL (63 aa). Residues 166–184 constitute a DNA-binding region (H-T-H motif); it reads VGTVKTRIHRGREALRKQL.

This sequence belongs to the sigma-70 factor family. ECF subfamily. As to quaternary structure, interacts transiently with the RNA polymerase catalytic core formed by RpoA, RpoB, RpoC and RpoZ (2 alpha, 1 beta, 1 beta' and 1 omega subunit) to form the RNA polymerase holoenzyme that can initiate transcription. Forms a heterodimer with cognate anti-sigma factor RsiW, which prevents it from binding to the -10 and -35 promoter elements.

Its activity is regulated as follows. Extracytoplasmic function (ECF) sigma factors are held in an inactive form by a cognate anti-sigma factor (RsiW for this protein) until released by regulated membrane proteolysis (RIP). RIP occurs when an extracytoplasmic signal (envelope stress) triggers a concerted proteolytic cascade to transmit information and elicit cellular responses. The anti-sigma factor RsiW is a membrane protein, binding sigma-W in the cytoplasm. RsiW is first cut extracytoplasmically (site-1 protease, S1P, by PrsW), then within the membrane itself (site-2 protease, S2P, by RasP), while cytoplasmic proteases (predominantly ClpX-ClpP) finish degrading the regulatory protein, liberating sigma-W. Its function is as follows. Sigma factors are initiation factors that promote the attachment of RNA polymerase (RNAP) to specific initiation sites and are then released. Sigma-W controls genes involved in response to cell envelope stress such as antimicrobial peptides, alkaline pH, transport processes and detoxification. In Bacillus subtilis (strain 168), this protein is ECF RNA polymerase sigma factor SigW (sigW).